Here is a 385-residue protein sequence, read N- to C-terminus: Tryptophan--tRNA ligase (385 aa).

Positions 82–90 match the 'HIGH' region motif; the sequence is PSGPMHIGH. Residues 253-257 carry the 'KMSKS' region motif; the sequence is KMSAS.

It belongs to the class-I aminoacyl-tRNA synthetase family.

The protein resides in the cytoplasm. It carries out the reaction tRNA(Trp) + L-tryptophan + ATP = L-tryptophyl-tRNA(Trp) + AMP + diphosphate + H(+). In Pyrococcus furiosus (strain ATCC 43587 / DSM 3638 / JCM 8422 / Vc1), this protein is Tryptophan--tRNA ligase.